The chain runs to 324 residues: N-acetylmuramoyl-L-alanine amidase sle1 (324 aa).

The signal sequence occupies residues 1–25 (MQKKYITAIIGTTALSALASTHAQA). LysM domains are found at residues 27 to 70 (TTHT…VLKV), 84 to 127 (TVYT…KLKV), and 147 to 190 (ATYT…KLKV). The Peptidase C51 domain maps to 200–324 (SNNTRSNGGY…YQVRNYKFIH (125 aa)).

It localises to the secreted. It is found in the cell surface. It carries out the reaction Hydrolyzes the link between N-acetylmuramoyl residues and L-amino acid residues in certain cell-wall glycopeptides.. In terms of biological role, peptidoglycan hydrolase involved in the splitting of the septum during cell division. The chain is N-acetylmuramoyl-L-alanine amidase sle1 (sle1) from Staphylococcus epidermidis (strain ATCC 12228 / FDA PCI 1200).